A 134-amino-acid polypeptide reads, in one-letter code: Small ribosomal subunit protein bS6 (134 aa).

This sequence belongs to the bacterial ribosomal protein bS6 family.

In terms of biological role, binds together with bS18 to 16S ribosomal RNA. The protein is Small ribosomal subunit protein bS6 of Pelodictyon phaeoclathratiforme (strain DSM 5477 / BU-1).